The chain runs to 91 residues: Elongation factor 1-beta (91 aa).

Belongs to the EF-1-beta/EF-1-delta family.

Its function is as follows. Promotes the exchange of GDP for GTP in EF-1-alpha/GDP, thus allowing the regeneration of EF-1-alpha/GTP that could then be used to form the ternary complex EF-1-alpha/GTP/AAtRNA. In Sulfurisphaera tokodaii (strain DSM 16993 / JCM 10545 / NBRC 100140 / 7) (Sulfolobus tokodaii), this protein is Elongation factor 1-beta.